The following is a 591-amino-acid chain: Uncoordinated protein 58 (591 aa).

A disordered region spans residues 1-24 (MFFYSPNVAPQPSSTSHRRPTLTH). Residues 184-204 (VILVSVLIGYLCLGAWILMLL) traverse the membrane as a helical segment. A glycan (N-linked (GlcNAc...) asparagine) is linked at asparagine 226. Helical transmembrane passes span 289-309 (TFPTAILYVLTVLTTCGYGEV), 318-338 (VFSVAFALVGIPLMFITAADI), 400-420 (PIGAYVSCICIYCSIGSAMFI), 428-448 (FIHAFHFGFNLIVTVGLGDIV), and 453-473 (IFLSLIVAFVIVGLSVVTMCV).

This sequence belongs to the two pore domain potassium channel (TC 1.A.1.8) family.

It localises to the membrane. In terms of biological role, has a role in mobility, possibly in the transport of potassium in muscles. The protein is Uncoordinated protein 58 of Caenorhabditis elegans.